A 302-amino-acid chain; its full sequence is MASSWFFIVFLVLTVASVRCTTVDHMPSTDEDARDYSKLKTKTEEATDEHHSRTQQAKDELKSKADHAANEVKSNTQQAKDRASEVGKEAKEYTESWTEWAKEKISEGLGFKQDDDPKGSVEKAFDSVADTATKTKDKLQDMASGAGEYSAGKAKDMKDTAYKKTDDVKNAAKGKSSEMRQATTEKARELADSAKENANTAYIAAKEKVRDMADRTSEMTNEAQERGARKAEEAKEVVAEKAEGAAEETKKKNEERGESLKWAKEKAKQGYDAAKSKAEETIESAKDTIASGYESRSRNHKN.

Disordered regions lie at residues 25–93, 168–193, and 205–302; these read HMPS…AKEY, VKNA…LADS, and AKEK…NHKN. 2 stretches are compositionally biased toward basic and acidic residues: residues 34 to 70 and 79 to 93; these read RDYS…HAAN and AKDR…AKEY. The span at 205-286 shows a compositional bias: basic and acidic residues; that stretch reads AKEKVRDMAD…KAEETIESAK (82 aa).

The protein belongs to the LEA type 1 family.

Its function is as follows. LEA protein are late embryonic proteins abundant in higher plant seed embryos. There are two subsets of LEA proteins (5a and 5b), the first ones are expressed when the cotyledon weight reach 80 mg and the second set are expressed above 100 mg. The function of those proteins is not known. This is Late embryogenesis abundant protein D-29 from Gossypium hirsutum (Upland cotton).